We begin with the raw amino-acid sequence, 508 residues long: Histidine ammonia-lyase (508 aa).

The 5-imidazolinone (Ala-Gly) cross-link spans 145–147 (ASG). Residue serine 146 is modified to 2,3-didehydroalanine (Ser).

It belongs to the PAL/histidase family. Post-translationally, contains an active site 4-methylidene-imidazol-5-one (MIO), which is formed autocatalytically by cyclization and dehydration of residues Ala-Ser-Gly.

The protein localises to the cytoplasm. The catalysed reaction is L-histidine = trans-urocanate + NH4(+). It participates in amino-acid degradation; L-histidine degradation into L-glutamate; N-formimidoyl-L-glutamate from L-histidine: step 1/3. The protein is Histidine ammonia-lyase of Myxococcus xanthus (strain DK1622).